The chain runs to 143 residues: 18.1 kDa class I heat shock protein (143 aa).

Residues glutamate 29–serine 143 form the sHSP domain.

The protein belongs to the small heat shock protein (HSP20) family. As to quaternary structure, forms oligomeric structures.

Its subcellular location is the cytoplasm. The sequence is that of 18.1 kDa class I heat shock protein (HSP18.1) from Medicago sativa (Alfalfa).